A 98-amino-acid chain; its full sequence is Large ribosomal subunit protein uL23 (98 aa).

Belongs to the universal ribosomal protein uL23 family. As to quaternary structure, part of the 50S ribosomal subunit. Contacts protein L29, and trigger factor when it is bound to the ribosome.

In terms of biological role, one of the early assembly proteins it binds 23S rRNA. One of the proteins that surrounds the polypeptide exit tunnel on the outside of the ribosome. Forms the main docking site for trigger factor binding to the ribosome. In Cereibacter sphaeroides (strain ATCC 17029 / ATH 2.4.9) (Rhodobacter sphaeroides), this protein is Large ribosomal subunit protein uL23.